A 213-amino-acid polypeptide reads, in one-letter code: Glutathione S-transferase DHAR1, mitochondrial (213 aa).

Positions 8 and 19 each coordinate glutathione. Lysine 8 and aspartate 19 together coordinate L-ascorbate. Positions 10-83 (AVGAPDHLGD…DVIVGILEEK (74 aa)) constitute a GST N-terminal domain. The Nucleophile role is filled by cysteine 20. At cysteine 20 the chain carries S-glutathionyl cysteine. The Glutathione-binding signature appears at 20–25 (CPFSQR). The glutathione site is built by lysine 47, valine 60, and serine 73. The GST C-terminal domain occupies 84-213 (YPDPPLKTPA…ISGWAPKVNP (130 aa)). A Copper-binding motif is present at residues 133–137 (HLKSH). Histidine 160 and tryptophan 207 together coordinate glutathione. Residue lysine 210 participates in L-ascorbate binding.

This sequence belongs to the GST superfamily. DHAR family. Monomer. Interacts with copper (Cu). Spontaneous S-glutathionylation in the presence of oxidized glutathione (GSSG). In terms of tissue distribution, expressed at least in roots and leaves.

The protein resides in the mitochondrion. Its subcellular location is the cytoplasm. The protein localises to the cytosol. It localises to the peroxisome. It is found in the membrane. It catalyses the reaction RX + glutathione = an S-substituted glutathione + a halide anion + H(+). The enzyme catalyses L-dehydroascorbate + 2 glutathione = glutathione disulfide + L-ascorbate. Functionally, displays a dual function. As a soluble protein, exhibits glutathione-dependent thiol transferase and dehydroascorbate (DHA) reductase activities. Key component of the ascorbate recycling system. Involved in the redox homeostasis, especially in scavenging of ROS under oxidative stresses, subsequently to biotic or abiotic inducers. As a peripheral membrane protein, could also function as voltage-gated ion channel. This Arabidopsis thaliana (Mouse-ear cress) protein is Glutathione S-transferase DHAR1, mitochondrial.